The primary structure comprises 150 residues: Cell division protein SepF (150 aa).

This sequence belongs to the SepF family. Homodimer. Interacts with FtsZ.

The protein resides in the cytoplasm. Its function is as follows. Cell division protein that is part of the divisome complex and is recruited early to the Z-ring. Probably stimulates Z-ring formation, perhaps through the cross-linking of FtsZ protofilaments. Its function overlaps with FtsA. The sequence is that of Cell division protein SepF from Clostridium botulinum (strain ATCC 19397 / Type A).